The sequence spans 380 residues: Succinyl-diaminopimelate desuccinylase (380 aa).

His71 is a Zn(2+) binding site. Asp73 is a catalytic residue. Residue Asp104 coordinates Zn(2+). Glu136 functions as the Proton acceptor in the catalytic mechanism. 3 residues coordinate Zn(2+): Glu137, Glu166, and His351.

The protein belongs to the peptidase M20A family. DapE subfamily. In terms of assembly, homodimer. It depends on Zn(2+) as a cofactor. Co(2+) serves as cofactor.

It carries out the reaction N-succinyl-(2S,6S)-2,6-diaminopimelate + H2O = (2S,6S)-2,6-diaminopimelate + succinate. Its pathway is amino-acid biosynthesis; L-lysine biosynthesis via DAP pathway; LL-2,6-diaminopimelate from (S)-tetrahydrodipicolinate (succinylase route): step 3/3. In terms of biological role, catalyzes the hydrolysis of N-succinyl-L,L-diaminopimelic acid (SDAP), forming succinate and LL-2,6-diaminopimelate (DAP), an intermediate involved in the bacterial biosynthesis of lysine and meso-diaminopimelic acid, an essential component of bacterial cell walls. In Ehrlichia canis (strain Jake), this protein is Succinyl-diaminopimelate desuccinylase.